Consider the following 351-residue polypeptide: Probable sugar phosphate/phosphate translocator At5g11230 (351 aa).

A run of 10 helical transmembrane segments spans residues 15–35, 49–69, 89–109, 113–133, 141–161, 165–185, 205–225, 236–256, 263–283, and 286–306; these read IVLS…VIVY, FPIS…FLII, VVPI…AYIY, SFIQ…GVLF, DTMM…YGEA, VWGV…LVLI, VAPC…FPVL, AIFG…FLLV, TMNV…WSVI, and TVTP…AYYN. Residues 38–156 enclose the EamA domain; sequence YILDKKMYNW…LSISFGVAIA (119 aa). Residues 321–351 are disordered; sequence KKIQQADEESGRLLEEREGDVEGKKNDQSGN.

This sequence belongs to the TPT transporter family. TPT (TC 2.A.7.9) subfamily.

Its subcellular location is the membrane. The polypeptide is Probable sugar phosphate/phosphate translocator At5g11230 (Arabidopsis thaliana (Mouse-ear cress)).